A 475-amino-acid chain; its full sequence is Putative response regulator NtrX-like (475 aa).

Positions D5–C121 constitute a Response regulatory domain. A 4-aspartylphosphate modification is found at D54. The Sigma-54 factor interaction domain occupies L143–I369. ATP-binding positions include G171 to E178 and A232 to E241.

Its function is as follows. Member of the two-component regulatory system RT0550/RT0603. The polypeptide is Putative response regulator NtrX-like (Rickettsia typhi (strain ATCC VR-144 / Wilmington)).